The following is a 245-amino-acid chain: Biosynthetic peptidoglycan transglycosylase (245 aa).

A helical transmembrane segment spans residues 13 to 35 (VGLARWIVYAGSVFAGAWLATQL).

It belongs to the glycosyltransferase 51 family.

The protein localises to the cell inner membrane. It catalyses the reaction [GlcNAc-(1-&gt;4)-Mur2Ac(oyl-L-Ala-gamma-D-Glu-L-Lys-D-Ala-D-Ala)](n)-di-trans,octa-cis-undecaprenyl diphosphate + beta-D-GlcNAc-(1-&gt;4)-Mur2Ac(oyl-L-Ala-gamma-D-Glu-L-Lys-D-Ala-D-Ala)-di-trans,octa-cis-undecaprenyl diphosphate = [GlcNAc-(1-&gt;4)-Mur2Ac(oyl-L-Ala-gamma-D-Glu-L-Lys-D-Ala-D-Ala)](n+1)-di-trans,octa-cis-undecaprenyl diphosphate + di-trans,octa-cis-undecaprenyl diphosphate + H(+). Its pathway is cell wall biogenesis; peptidoglycan biosynthesis. Functionally, peptidoglycan polymerase that catalyzes glycan chain elongation from lipid-linked precursors. This chain is Biosynthetic peptidoglycan transglycosylase, found in Burkholderia vietnamiensis (strain G4 / LMG 22486) (Burkholderia cepacia (strain R1808)).